The following is an 849-amino-acid chain: Serrate RNA effector molecule homolog A (849 aa).

Disordered regions lie at residues methionine 1 to aspartate 90 and lysine 276 to leucine 409. Composition is skewed to basic and acidic residues over residues tyrosine 8–leucine 73, lysine 276–asparagine 306, and glutamate 314–lysine 342. Over residues serine 354 to threonine 364 the composition is skewed to acidic residues. Residues arginine 381 to lysine 405 show a composition bias toward basic and acidic residues.

It belongs to the ARS2 family. As to quaternary structure, interacts ncbp1/cbp80.

The protein localises to the nucleus. It localises to the nucleoplasm. Its subcellular location is the cytoplasm. Functionally, acts as a mediator between the cap-binding complex (CBC) and the primary microRNAs (miRNAs) processing machinery during cell proliferation. Contributes to the stability and delivery of capped primary miRNA transcripts to the primary miRNA processing complex, thereby playing a role in RNA-mediated gene silencing (RNAi) by miRNAs. The protein is Serrate RNA effector molecule homolog A (srrt-a) of Xenopus laevis (African clawed frog).